A 581-amino-acid chain; its full sequence is Invertase (581 aa).

The signal sequence occupies residues 1 to 22; it reads MFLKYILASGICLVSLLSSTNA. 6 N-linked (GlcNAc...) asparagine glycosylation sites follow: Asn37, Asn40, Asn46, Asn57, Asn62, and Asn79. Residues 94-97, Gln113, and 158-159 each bind substrate; these read FMND and FS. Asp97 is a catalytic residue. Asn168 and Asn175 each carry an N-linked (GlcNAc...) asparagine glycan. Substrate is bound by residues 227–228 and Glu280; that span reads RD. N-linked (GlcNAc...) asparagine glycosylation occurs at Asn322. Trp366 is a binding site for substrate. N-linked (GlcNAc...) asparagine glycosylation is found at Asn399, Asn409, Asn425, Asn446, Asn452, Asn519, and Asn569.

This sequence belongs to the glycosyl hydrolase 32 family. Glycosylated; contains 67% carbohydrates. This is composed of equimolar amounts of mannose and galactose. There is also a small amount of glucosamine present.

It carries out the reaction Hydrolysis of terminal non-reducing beta-D-fructofuranoside residues in beta-D-fructofuranosides.. The chain is Invertase (inv1) from Schizosaccharomyces pombe (strain 972 / ATCC 24843) (Fission yeast).